A 293-amino-acid polypeptide reads, in one-letter code: Pyridoxal 5'-phosphate synthase subunit PdxS (293 aa).

Asp23 contributes to the D-ribose 5-phosphate binding site. The Schiff-base intermediate with D-ribose 5-phosphate role is filled by Lys80. Position 152 (Gly152) interacts with D-ribose 5-phosphate. D-glyceraldehyde 3-phosphate is bound at residue Arg164. Residues Gly213 and 234-235 (GS) contribute to the D-ribose 5-phosphate site.

This sequence belongs to the PdxS/SNZ family. In the presence of PdxT, forms a dodecamer of heterodimers.

It catalyses the reaction aldehydo-D-ribose 5-phosphate + D-glyceraldehyde 3-phosphate + L-glutamine = pyridoxal 5'-phosphate + L-glutamate + phosphate + 3 H2O + H(+). It functions in the pathway cofactor biosynthesis; pyridoxal 5'-phosphate biosynthesis. Functionally, catalyzes the formation of pyridoxal 5'-phosphate from ribose 5-phosphate (RBP), glyceraldehyde 3-phosphate (G3P) and ammonia. The ammonia is provided by the PdxT subunit. Can also use ribulose 5-phosphate and dihydroxyacetone phosphate as substrates, resulting from enzyme-catalyzed isomerization of RBP and G3P, respectively. The sequence is that of Pyridoxal 5'-phosphate synthase subunit PdxS from Desulfovibrio desulfuricans (strain ATCC 27774 / DSM 6949 / MB).